We begin with the raw amino-acid sequence, 608 residues long: Thiol:disulfide interchange protein DsbD (608 aa).

The signal sequence occupies residues Met-1–Ala-22. Cys-135 and Cys-141 are oxidised to a cystine. Positions Ser-161 to Glu-173 are enriched in polar residues. The disordered stretch occupies residues Ser-161–Glu-180. The next 8 helical transmembrane spans lie at Leu-194–Phe-214, Phe-241–Ala-261, Ile-273–Phe-293, Gly-314–Cys-334, Val-352–Ile-372, Trp-387–Leu-407, Val-414–Ala-434, and Ser-456–Pro-476. Residues Cys-212 and Cys-334 are joined by a disulfide bond. Positions Leu-469–Lys-608 constitute a Thioredoxin domain. A disulfide bridge links Cys-522 with Cys-525.

Belongs to the thioredoxin family. DsbD subfamily.

The protein localises to the cell inner membrane. The catalysed reaction is [protein]-dithiol + NAD(+) = [protein]-disulfide + NADH + H(+). It carries out the reaction [protein]-dithiol + NADP(+) = [protein]-disulfide + NADPH + H(+). Required to facilitate the formation of correct disulfide bonds in some periplasmic proteins and for the assembly of the periplasmic c-type cytochromes. Acts by transferring electrons from cytoplasmic thioredoxin to the periplasm. This transfer involves a cascade of disulfide bond formation and reduction steps. This Colwellia psychrerythraea (strain 34H / ATCC BAA-681) (Vibrio psychroerythus) protein is Thiol:disulfide interchange protein DsbD.